The chain runs to 231 residues: Ribose-5-phosphate isomerase A (231 aa).

Residues S31–T34, D87–D90, and K100–G103 each bind substrate. E109 functions as the Proton acceptor in the catalytic mechanism. Residue K127 participates in substrate binding.

Belongs to the ribose 5-phosphate isomerase family. In terms of assembly, homodimer.

The catalysed reaction is aldehydo-D-ribose 5-phosphate = D-ribulose 5-phosphate. The protein operates within carbohydrate degradation; pentose phosphate pathway; D-ribose 5-phosphate from D-ribulose 5-phosphate (non-oxidative stage): step 1/1. Catalyzes the reversible conversion of ribose-5-phosphate to ribulose 5-phosphate. The chain is Ribose-5-phosphate isomerase A from Chlamydia pneumoniae (Chlamydophila pneumoniae).